The following is a 123-amino-acid chain: Immunoglobulin lambda variable 5-37 (123 aa).

An N-terminal signal peptide occupies residues Met-1 to Ser-19. Residues Gln-20–Pro-44 are framework-1. The 103-residue stretch at Pro-21–Ser-123 folds into the Ig-like domain. Cysteines 41 and 115 form a disulfide. Residues Ser-45–Asn-53 form a complementarity-determining-1 region. The tract at residues Ile-54–Tyr-70 is framework-2. The interval Tyr-71–Lys-77 is complementarity-determining-2. The interval Gly-78 to Cys-115 is framework-3. The segment at Met-116–Ser-123 is complementarity-determining-3.

As to quaternary structure, immunoglobulins are composed of two identical heavy chains and two identical light chains; disulfide-linked.

It is found in the secreted. It localises to the cell membrane. V region of the variable domain of immunoglobulin light chains that participates in the antigen recognition. Immunoglobulins, also known as antibodies, are membrane-bound or secreted glycoproteins produced by B lymphocytes. In the recognition phase of humoral immunity, the membrane-bound immunoglobulins serve as receptors which, upon binding of a specific antigen, trigger the clonal expansion and differentiation of B lymphocytes into immunoglobulins-secreting plasma cells. Secreted immunoglobulins mediate the effector phase of humoral immunity, which results in the elimination of bound antigens. The antigen binding site is formed by the variable domain of one heavy chain, together with that of its associated light chain. Thus, each immunoglobulin has two antigen binding sites with remarkable affinity for a particular antigen. The variable domains are assembled by a process called V-(D)-J rearrangement and can then be subjected to somatic hypermutations which, after exposure to antigen and selection, allow affinity maturation for a particular antigen. This is Immunoglobulin lambda variable 5-37 from Homo sapiens (Human).